A 336-amino-acid chain; its full sequence is Ketol-acid reductoisomerase (NADP(+)) 1 (336 aa).

The 180-residue stretch at 2 to 181 folds into the KARI N-terminal Rossmann domain; it reads AKVYYEKDVT…GATRAGVLET (180 aa). NADP(+) is bound by residues 25–28, Arg-48, Ser-52, and 82–85; these read YGSQ and DELQ. Residue His-107 is part of the active site. Gly-133 is a binding site for NADP(+). In terms of domain architecture, KARI C-terminal knotted spans 182 to 327; that stretch reads TFKEETETDL…RKLRGMMPFV (146 aa). Mg(2+) is bound by residues Asp-190, Glu-194, Glu-226, and Glu-230. Substrate is bound at residue Ser-251.

It belongs to the ketol-acid reductoisomerase family. It depends on Mg(2+) as a cofactor.

It carries out the reaction (2R)-2,3-dihydroxy-3-methylbutanoate + NADP(+) = (2S)-2-acetolactate + NADPH + H(+). The enzyme catalyses (2R,3R)-2,3-dihydroxy-3-methylpentanoate + NADP(+) = (S)-2-ethyl-2-hydroxy-3-oxobutanoate + NADPH + H(+). It functions in the pathway amino-acid biosynthesis; L-isoleucine biosynthesis; L-isoleucine from 2-oxobutanoate: step 2/4. Its pathway is amino-acid biosynthesis; L-valine biosynthesis; L-valine from pyruvate: step 2/4. Functionally, involved in the biosynthesis of branched-chain amino acids (BCAA). Catalyzes an alkyl-migration followed by a ketol-acid reduction of (S)-2-acetolactate (S2AL) to yield (R)-2,3-dihydroxy-isovalerate. In the isomerase reaction, S2AL is rearranged via a Mg-dependent methyl migration to produce 3-hydroxy-3-methyl-2-ketobutyrate (HMKB). In the reductase reaction, this 2-ketoacid undergoes a metal-dependent reduction by NADPH to yield (R)-2,3-dihydroxy-isovalerate. The polypeptide is Ketol-acid reductoisomerase (NADP(+)) 1 (Bacillus anthracis).